Here is a 174-residue protein sequence, read N- to C-terminus: ATP-dependent protease subunit HslV (174 aa).

Threonine 2 is an active-site residue. Na(+) contacts are provided by glycine 157, aspartate 160, and threonine 163.

It belongs to the peptidase T1B family. HslV subfamily. As to quaternary structure, a double ring-shaped homohexamer of HslV is capped on each side by a ring-shaped HslU homohexamer. The assembly of the HslU/HslV complex is dependent on binding of ATP.

It localises to the cytoplasm. The enzyme catalyses ATP-dependent cleavage of peptide bonds with broad specificity.. Its activity is regulated as follows. Allosterically activated by HslU binding. Functionally, protease subunit of a proteasome-like degradation complex believed to be a general protein degrading machinery. This is ATP-dependent protease subunit HslV from Aliivibrio fischeri (strain MJ11) (Vibrio fischeri).